Here is a 130-residue protein sequence, read N- to C-terminus: Small ribosomal subunit protein uS8z/uS8w (130 aa).

Belongs to the universal ribosomal protein uS8 family.

The protein resides in the cytoplasm. The sequence is that of Small ribosomal subunit protein uS8z/uS8w (RPS15AA) from Arabidopsis thaliana (Mouse-ear cress).